Consider the following 278-residue polypeptide: Thiazole synthase (278 aa).

The active-site Schiff-base intermediate with DXP is the lysine 107. Residues glycine 168, 194 to 195, and 216 to 217 contribute to the 1-deoxy-D-xylulose 5-phosphate site; these read AG and AS.

It belongs to the ThiG family. Homotetramer. Forms heterodimers with either ThiH or ThiS.

Its subcellular location is the cytoplasm. The catalysed reaction is [ThiS sulfur-carrier protein]-C-terminal-Gly-aminoethanethioate + 2-iminoacetate + 1-deoxy-D-xylulose 5-phosphate = [ThiS sulfur-carrier protein]-C-terminal Gly-Gly + 2-[(2R,5Z)-2-carboxy-4-methylthiazol-5(2H)-ylidene]ethyl phosphate + 2 H2O + H(+). Its pathway is cofactor biosynthesis; thiamine diphosphate biosynthesis. Functionally, catalyzes the rearrangement of 1-deoxy-D-xylulose 5-phosphate (DXP) to produce the thiazole phosphate moiety of thiamine. Sulfur is provided by the thiocarboxylate moiety of the carrier protein ThiS. In vitro, sulfur can be provided by H(2)S. The chain is Thiazole synthase from Corynebacterium urealyticum (strain ATCC 43042 / DSM 7109).